Consider the following 152-residue polypeptide: uncharacterized protein (152 aa).

A signal peptide spans 1–23; it reads MYSILIACLVLLLCLVIYVGHRA.

This sequence belongs to the asfivirus EP152R family.

The protein resides in the virion. This is an uncharacterized protein from Ornithodoros (relapsing fever ticks).